Here is a 62-residue protein sequence, read N- to C-terminus: Large ribosomal subunit protein bL28 (62 aa).

This sequence belongs to the bacterial ribosomal protein bL28 family.

The sequence is that of Large ribosomal subunit protein bL28 from Caldicellulosiruptor bescii (strain ATCC BAA-1888 / DSM 6725 / KCTC 15123 / Z-1320) (Anaerocellum thermophilum).